A 263-amino-acid chain; its full sequence is ATP synthase subunit a (263 aa).

Transmembrane regions (helical) follow at residues 31-51 (LDTL…FYSI), 89-109 (IGSL…MDLI), 133-153 (DPNA…VYTF), 205-225 (LFGN…LPFW), and 235-255 (AIFH…LTIV).

This sequence belongs to the ATPase A chain family. In terms of assembly, F-type ATPases have 2 components, CF(1) - the catalytic core - and CF(0) - the membrane proton channel. CF(1) has five subunits: alpha(3), beta(3), gamma(1), delta(1), epsilon(1). CF(0) has three main subunits: a(1), b(2) and c(9-12). The alpha and beta chains form an alternating ring which encloses part of the gamma chain. CF(1) is attached to CF(0) by a central stalk formed by the gamma and epsilon chains, while a peripheral stalk is formed by the delta and b chains.

It is found in the cell inner membrane. Functionally, key component of the proton channel; it plays a direct role in the translocation of protons across the membrane. This Dichelobacter nodosus (strain VCS1703A) protein is ATP synthase subunit a.